The primary structure comprises 360 residues: Nicotinate-nucleotide--dimethylbenzimidazole phosphoribosyltransferase (360 aa).

The active-site Proton acceptor is the Glu-327.

The protein belongs to the CobT family.

The enzyme catalyses 5,6-dimethylbenzimidazole + nicotinate beta-D-ribonucleotide = alpha-ribazole 5'-phosphate + nicotinate + H(+). It participates in nucleoside biosynthesis; alpha-ribazole biosynthesis; alpha-ribazole from 5,6-dimethylbenzimidazole: step 1/2. Catalyzes the synthesis of alpha-ribazole-5'-phosphate from nicotinate mononucleotide (NAMN) and 5,6-dimethylbenzimidazole (DMB). In Shewanella baltica (strain OS155 / ATCC BAA-1091), this protein is Nicotinate-nucleotide--dimethylbenzimidazole phosphoribosyltransferase.